The sequence spans 838 residues: pre-rRNA 2'-O-ribose RNA methyltransferase FTSJ3 (838 aa).

Residues Gly56, Trp58, Asp76, Asp92, and Asp117 each contribute to the S-adenosyl-L-methionine site. The active-site Proton acceptor is the Lys157. The tract at residues 332–367 (ISLSSEEEEEGDEEEAVAETKQAPEEEEEREEEQLN) is disordered. 3 positions are modified to phosphoserine: Ser333, Ser335, and Ser336. The span at 336–348 (SEEEEEGDEEEAV) shows a compositional bias: acidic residues. Arg390 is modified (citrulline). Residues 453 to 482 (IYVSDAEDDDDTSLESDLDPEELAGVRTHS) are disordered. Residues 457 to 474 (DAEDDDDTSLESDLDPEE) are compositionally biased toward acidic residues. Phosphoserine is present on residues Ser532 and Ser545. The tract at residues 537 to 639 (DADEALEISQ…GRGSKADEDG (103 aa)) is disordered. Lys571 is covalently cross-linked (Glycyl lysine isopeptide (Lys-Gly) (interchain with G-Cter in SUMO2)). Ser576 is subject to Phosphoserine. Glycyl lysine isopeptide (Lys-Gly) (interchain with G-Cter in SUMO2) cross-links involve residues Lys634 and Lys650. At Ser667 the chain carries Phosphoserine. Lys669 participates in a covalent cross-link: Glycyl lysine isopeptide (Lys-Gly) (interchain with G-Cter in SUMO2). Ser679 carries the post-translational modification Phosphoserine. A Glycyl lysine isopeptide (Lys-Gly) (interchain with G-Cter in SUMO2) cross-link involves residue Lys701. Positions 730–768 (IKKVAEAKARKKRRVLKKLEQTKKKAEAVVNTVDISERE) form a coiled coil. A Citrulline modification is found at Arg774. Residues 802-812 (VRRPAGVKGHF) show a composition bias toward basic residues. The disordered stretch occupies residues 802 to 838 (VRRPAGVKGHFKVVDSRMKKDQRAQQRKEQKKKHKRK). Over residues 813–829 (KVVDSRMKKDQRAQQRK) the composition is skewed to basic and acidic residues.

Belongs to the class I-like SAM-binding methyltransferase superfamily. RNA methyltransferase RlmE family. SPB1 subfamily. As to quaternary structure, interacts with NIP7. In terms of processing, citrullinated by PADI4.

It localises to the nucleus. Its subcellular location is the nucleolus. The enzyme catalyses a ribonucleotide in rRNA + S-adenosyl-L-methionine = a 2'-O-methylribonucleotide in rRNA + S-adenosyl-L-homocysteine + H(+). In terms of biological role, RNA 2'-O-methyltransferase involved in the processing of the 34S pre-rRNA to 18S rRNA and in 40S ribosomal subunit formation. The chain is pre-rRNA 2'-O-ribose RNA methyltransferase FTSJ3 (Ftsj3) from Mus musculus (Mouse).